The following is a 408-amino-acid chain: Argininosuccinate synthase (408 aa).

8–16 (AYSGGLDTT) contributes to the ATP binding site. Residue Tyr86 participates in L-citrulline binding. Gly116 provides a ligand contact to ATP. Residues Thr118, Asn122, and Asp123 each coordinate L-aspartate. Asn122 lines the L-citrulline pocket. The L-citrulline site is built by Arg126, Ser177, Ser186, Glu263, and Tyr275.

Belongs to the argininosuccinate synthase family. Type 1 subfamily. As to quaternary structure, homotetramer.

It localises to the cytoplasm. It catalyses the reaction L-citrulline + L-aspartate + ATP = 2-(N(omega)-L-arginino)succinate + AMP + diphosphate + H(+). Its pathway is amino-acid biosynthesis; L-arginine biosynthesis; L-arginine from L-ornithine and carbamoyl phosphate: step 2/3. The chain is Argininosuccinate synthase from Agathobacter rectalis (strain ATCC 33656 / DSM 3377 / JCM 17463 / KCTC 5835 / VPI 0990) (Eubacterium rectale).